The sequence spans 378 residues: T-cell immunoglobulin and mucin domain-containing protein 4 (378 aa).

Positions 1–24 are cleaved as a signal peptide; it reads MSKEPLILWLMIEFWWLYLTPVTS. Residues 25 to 126 enclose the Ig-like V-type domain; the sequence is ETVVTEVLGH…PGWFNDVKIN (102 aa). Topologically, residues 25-314 are extracellular; it reads ETVVTEVLGH…SMKNEMPISQ (290 aa). Cystine bridges form between C40–C112, C53–C64, and C59–C111. Disordered stretches follow at residues 136–160 and 269–304; these read TTTH…TRQM and WKTS…GIPM. Positions 269-297 are enriched in polar residues; that stretch reads WKTSDSVSSPQPGASDTAVPEQNKTTKTG. An N-linked (GlcNAc...) asparagine glycan is attached at N291. A helical transmembrane segment spans residues 315-335; that stretch reads LLMIIAPSLGFVLFALFVAFL. At 336 to 378 the chain is on the cytoplasmic side; the sequence is LRGKLMETYCSQKHTRLDYIGDSKNVLNDVQHGREDEDGLFTL. At S358 the chain carries Phosphoserine.

It belongs to the immunoglobulin superfamily. TIM family. In terms of assembly, interacts with MERTK; this interaction enhances TIMD4-mediated efferocytosis. Interacts with EPHA2.

The protein localises to the cell membrane. The protein resides in the secreted. Its subcellular location is the extracellular exosome. In terms of biological role, phosphatidylserine receptor that plays different role in immune response including phagocytosis of apoptotic cells and T-cell regulation. Controls T-cell activation in a bimodal fashion, decreasing the activation of naive T-cells by inducing cell cycle arrest, while increasing proliferation of activated T-cells by activating AKT1 and ERK1/2 phosphorylations and subsequent signaling pathways. Also plays a role in efferocytosis which is the process by which apoptotic cells are removed by phagocytic cells. Mechanistically, promotes the engulfment of apoptotic cells or exogenous particles by securing them to phagocytes through direct binding to phosphatidylserine present on apoptotic cells, while other engulfment receptors such as MERTK efficiently recognize apoptotic cells and mediate their ingestion. Additionally, promotes autophagy process by suppressing NLRP3 inflammasome activity via activation of LKB1/PRKAA1 pathway in a phosphatidylserine-dependent mechanism. (Microbial infection) Plays a positive role in exosome-mediated trafficking of HIV-1 virus and its entry into immune cells. The sequence is that of T-cell immunoglobulin and mucin domain-containing protein 4 (TIMD4) from Homo sapiens (Human).